Reading from the N-terminus, the 132-residue chain is UPF0102 protein Acid_2433 (132 aa).

It belongs to the UPF0102 family.

The sequence is that of UPF0102 protein Acid_2433 from Solibacter usitatus (strain Ellin6076).